The chain runs to 77 residues: Sec-independent protein translocase protein TatA (77 aa).

Residues 2–22 (GFGGISIWQLLIILLIVVMLF) traverse the membrane as a helical segment. Composition is skewed to basic and acidic residues over residues 46 to 59 (DNGE…EEPK) and 66 to 77 (QARKVEEPAKKD). Residues 46–77 (DNGEAEKPAVEEPKGQTIDAQARKVEEPAKKD) form a disordered region.

Belongs to the TatA/E family. In terms of assembly, the Tat system comprises two distinct complexes: a TatABC complex, containing multiple copies of TatA, TatB and TatC subunits, and a separate TatA complex, containing only TatA subunits. Substrates initially bind to the TatABC complex, which probably triggers association of the separate TatA complex to form the active translocon.

The protein localises to the cell inner membrane. Functionally, part of the twin-arginine translocation (Tat) system that transports large folded proteins containing a characteristic twin-arginine motif in their signal peptide across membranes. TatA could form the protein-conducting channel of the Tat system. In Ectopseudomonas mendocina (strain ymp) (Pseudomonas mendocina), this protein is Sec-independent protein translocase protein TatA.